Reading from the N-terminus, the 183-residue chain is Cyanate hydratase (183 aa).

Residues Arg118, Glu121, and Ser144 contribute to the active site.

This sequence belongs to the cyanase family.

It catalyses the reaction cyanate + hydrogencarbonate + 3 H(+) = NH4(+) + 2 CO2. Functionally, catalyzes the reaction of cyanate with bicarbonate to produce ammonia and carbon dioxide. The sequence is that of Cyanate hydratase from Cryptococcus neoformans var. neoformans serotype D (strain B-3501A) (Filobasidiella neoformans).